Here is a 228-residue protein sequence, read N- to C-terminus: MSLYWTMFGHPSEQDIDEIESWFDWPISVYDFPRFRDVNVNSENPIIKVTTRSGGGNREEYEENNEYVSLLEGFICDKDASWDSTYAIFKYKIPDRSLDKWREYIERKKLELKKSQQISTKKINEDDENNKDNIDNNSASTIVDEFMKAFTKIHENIETEKILQNTDKSFSNTREIEFKQPSQEQSQQQLSNECVVKITELLDKAKISINDLNKTIEKLNETVNKYHG.

Positions 196-228 form a coiled coil; sequence VKITELLDKAKISINDLNKTIEKLNETVNKYHG.

This is an uncharacterized protein from Acanthamoeba polyphaga (Amoeba).